Reading from the N-terminus, the 95-residue chain is Large ribosomal subunit protein bL25 (95 aa).

It belongs to the bacterial ribosomal protein bL25 family. Part of the 50S ribosomal subunit; part of the 5S rRNA/L5/L18/L25 subcomplex. Contacts the 5S rRNA. Binds to the 5S rRNA independently of L5 and L18.

Functionally, this is one of the proteins that binds to the 5S RNA in the ribosome where it forms part of the central protuberance. The protein is Large ribosomal subunit protein bL25 of Shewanella sp. (strain ANA-3).